A 270-amino-acid polypeptide reads, in one-letter code: Formamidopyrimidine-DNA glycosylase (270 aa).

Residue proline 2 is the Schiff-base intermediate with DNA of the active site. Catalysis depends on glutamate 3, which acts as the Proton donor. Lysine 58 acts as the Proton donor; for beta-elimination activity in catalysis. The DNA site is built by histidine 91, arginine 110, and arginine 151. Residues 236-270 (FVYGRGGENCKVCGTGLREIKLGQRASVYCPRCQS) form an FPG-type zinc finger. Arginine 260 serves as the catalytic Proton donor; for delta-elimination activity.

It belongs to the FPG family. In terms of assembly, monomer. Requires Zn(2+) as cofactor.

The enzyme catalyses Hydrolysis of DNA containing ring-opened 7-methylguanine residues, releasing 2,6-diamino-4-hydroxy-5-(N-methyl)formamidopyrimidine.. It catalyses the reaction 2'-deoxyribonucleotide-(2'-deoxyribose 5'-phosphate)-2'-deoxyribonucleotide-DNA = a 3'-end 2'-deoxyribonucleotide-(2,3-dehydro-2,3-deoxyribose 5'-phosphate)-DNA + a 5'-end 5'-phospho-2'-deoxyribonucleoside-DNA + H(+). Its function is as follows. Involved in base excision repair of DNA damaged by oxidation or by mutagenic agents. Acts as a DNA glycosylase that recognizes and removes damaged bases. Has a preference for oxidized purines, such as 7,8-dihydro-8-oxoguanine (8-oxoG). Has AP (apurinic/apyrimidinic) lyase activity and introduces nicks in the DNA strand. Cleaves the DNA backbone by beta-delta elimination to generate a single-strand break at the site of the removed base with both 3'- and 5'-phosphates. This Pseudomonas fluorescens (strain ATCC BAA-477 / NRRL B-23932 / Pf-5) protein is Formamidopyrimidine-DNA glycosylase.